Consider the following 81-residue polypeptide: Photosystem I iron-sulfur center (81 aa).

4Fe-4S ferredoxin-type domains lie at 2–31 (SHSV…MVPW) and 37–68 (GQIA…VRVY). [4Fe-4S] cluster-binding residues include Cys11, Cys14, Cys17, Cys21, Cys48, Cys51, Cys54, and Cys58.

In terms of assembly, the eukaryotic PSI reaction center is composed of at least 11 subunits. [4Fe-4S] cluster serves as cofactor.

Its subcellular location is the plastid. It localises to the chloroplast thylakoid membrane. The enzyme catalyses reduced [plastocyanin] + hnu + oxidized [2Fe-2S]-[ferredoxin] = oxidized [plastocyanin] + reduced [2Fe-2S]-[ferredoxin]. Its function is as follows. Apoprotein for the two 4Fe-4S centers FA and FB of photosystem I (PSI); essential for photochemical activity. FB is the terminal electron acceptor of PSI, donating electrons to ferredoxin. The C-terminus interacts with PsaA/B/D and helps assemble the protein into the PSI complex. Required for binding of PsaD and PsaE to PSI. PSI is a plastocyanin/cytochrome c6-ferredoxin oxidoreductase, converting photonic excitation into a charge separation, which transfers an electron from the donor P700 chlorophyll pair to the spectroscopically characterized acceptors A0, A1, FX, FA and FB in turn. This Euglena gracilis protein is Photosystem I iron-sulfur center.